The chain runs to 326 residues: Probable cell division protein WhiA (326 aa).

The segment at residues 275–308 is a DNA-binding region (H-T-H motif); the sequence is SLDELGHYADPPMTKDAVAGRIRRLLAMADKRAS.

The protein belongs to the WhiA family.

In terms of biological role, involved in cell division and chromosome segregation. The sequence is that of Probable cell division protein WhiA from Leifsonia xyli subsp. xyli (strain CTCB07).